Reading from the N-terminus, the 732-residue chain is MKVQEGLFVVAVFYLAYTQLVKGQPRKECQTRCGNVAVEYPFGTSPGCYYPGDESFNLTCNEQEKLFFGNMPVINMSLSGQLRVRLVRSRVCYDSQGKQTDYIAQRTTLGNFTLSELNRFTVVGCNSYAFLRTSGVEKYSTGCISICDSATTKNGSCSGEGCCQIPVPRGYSFVRVKPHSFHNHPTVHLFNPCTYAFLVEDGMFDFHALEDLNNLRNVTTFPVVLDWSIGDKTCKQVEYRGVCGGNSTCFDSTGGTGYNCKCLEGFEGNPYLPNGCQDINECISSRHNCSEHSTCENTKGSFNCNCPSGYRKDSLNSCTRKVRPEYFRWTQIFLGTTIGFSVIMLGISCLQQKIKHRKNTELRQKFFEQNGGGMLIQRVSGAGPSNVDVKIFTEKGMKEATNGYHESRILGQGGQGTVYKGILPDNSIVAIKKARLGNRSQVEQFINEVLVLSQINHRNVVKVLGCCLETEVPLLVYEFINSGTLFDHLHGSLYDSSLTWEHRLRIATEVAGSLAYLHSSASIPIIHRDIKTANILLDKNLTAKVADFGASRLIPMDKEQLTTIVQGTLGYLDPEYYNTGLLNEKSDVYSFGVVLMELLSGQKALCFERPHCPKNLVSCFASATKNNRFHEIIDGQVMNEDNQREIQEAARIAAECTRLMGEERPRMKEVAAELEALRVKTTKYKWSDQYRETGEIEHLLGVQILSAQGETSSSIGYDSIRNVTTLDIEAGR.

The N-terminal stretch at 1 to 23 is a signal peptide; the sequence is MKVQEGLFVVAVFYLAYTQLVKG. Over 24–329 the chain is Extracellular; sequence QPRKECQTRC…RKVRPEYFRW (306 aa). Residues Asn-57, Asn-75, Asn-111, Asn-154, Asn-217, and Asn-246 are each glycosylated (N-linked (GlcNAc...) asparagine). Positions 230–277 constitute an EGF-like 1 domain; that stretch reads GDKTCKQVEYRGVCGGNSTCFDSTGGTGYNCKCLEGFEGNPYLPNGCQ. 6 cysteine pairs are disulfide-bonded: Cys-234-Cys-249, Cys-243-Cys-260, Cys-262-Cys-276, Cys-282-Cys-295, Cys-289-Cys-304, and Cys-306-Cys-318. Positions 278-319 constitute an EGF-like 2; calcium-binding domain; the sequence is DINECISSRHNCSEHSTCENTKGSFNCNCPSGYRKDSLNSCT. Asn-288 carries N-linked (GlcNAc...) asparagine glycosylation. Residues 330 to 350 form a helical membrane-spanning segment; sequence TQIFLGTTIGFSVIMLGISCL. Residues 351–732 lie on the Cytoplasmic side of the membrane; that stretch reads QQKIKHRKNT…VTTLDIEAGR (382 aa). The residue at position 393 (Thr-393) is a Phosphothreonine. One can recognise a Protein kinase domain in the interval 404–677; the sequence is YHESRILGQG…KEVAAELEAL (274 aa). Residues 410-418 and Lys-432 each bind ATP; that span reads LGQGGQGTV. At Tyr-477 the chain carries Phosphotyrosine. Asp-529 acts as the Proton acceptor in catalysis. Phosphothreonine is present on residues Thr-563 and Thr-568. A Phosphotyrosine modification is found at Tyr-576.

This sequence belongs to the protein kinase superfamily. Ser/Thr protein kinase family. Predominantly expressed in green tissues such as stems and leaves. Detected at organ junctions.

The protein resides in the membrane. It catalyses the reaction L-seryl-[protein] + ATP = O-phospho-L-seryl-[protein] + ADP + H(+). The enzyme catalyses L-threonyl-[protein] + ATP = O-phospho-L-threonyl-[protein] + ADP + H(+). In terms of biological role, serine/threonine-protein kinase that may function as a signaling receptor of extracellular matrix component. Binding to pectin may have significance in the control of cell expansion, morphogenesis and development. This is Wall-associated receptor kinase 2 (WAK2) from Arabidopsis thaliana (Mouse-ear cress).